A 127-amino-acid chain; its full sequence is Glycine cleavage system H protein (127 aa).

The 83-residue stretch at 22 to 104 folds into the Lipoyl-binding domain; that stretch reads KARIGITHFA…YEKAWMIVVE (83 aa). N6-lipoyllysine is present on Lys-63.

Belongs to the GcvH family. In terms of assembly, the glycine cleavage system is composed of four proteins: P, T, L and H. The cofactor is (R)-lipoate.

The glycine cleavage system catalyzes the degradation of glycine. The H protein shuttles the methylamine group of glycine from the P protein to the T protein. Functionally, is also involved in protein lipoylation via its role as an octanoyl/lipoyl carrier protein intermediate. The polypeptide is Glycine cleavage system H protein (Bacillus subtilis (strain 168)).